A 326-amino-acid polypeptide reads, in one-letter code: MAPPENGILEVLENLLDRYKINLLQMMFGTFIATIVFFGGLMTFVEKYLPNSIRQSFRYGKHSFKGETDPLVAWLEVPKSWFKHFYTFALFWSWLAFYVLVSTVREQKEAPEYVLQFLDIMGGGRSHRKVEIDSTTACVGAFMLTLQCTRRFYETNFVQIFSKKSKINLSHYAVGYVHYFGAVIALLSNTSGFVRGSKPMEFSLDKLTSQQILYLGVFFLAWQQQYASNMILVNLRKDPRTGSVKTEKHLLPKGGLFNLLSSPHMFLEVVMYFCIADLYMPVRIWRLIFLWVASNQTINALLTHKWYQETFREYPKNRRAIIPFLL.

The next 5 membrane-spanning stretches (helical) occupy residues 26-46 (MMFG…TFVE), 84-104 (HFYT…VSTV), 167-187 (INLS…IALL), 212-232 (ILYL…NMIL), and 256-276 (LFNL…FCIA).

It belongs to the steroid 5-alpha reductase family. Polyprenal reductase subfamily.

It localises to the endoplasmic reticulum membrane. The catalysed reaction is a di-trans,poly-cis-dolichal + NADP(+) = a di-trans,poly-cis-polyprenal + NADPH + H(+). Its pathway is protein modification; protein glycosylation. Its function is as follows. Plays a key role in early steps of protein N-linked glycosylation by being involved in the conversion of polyprenol into dolichol. Acts as a polyprenal reductase that mediates the reduction of polyprenal into dolichal in a NADP-dependent mechanism. Dolichols are required for the synthesis of dolichol-linked monosaccharides and the oligosaccharide precursor used for N-glycosylation. The protein is Polyprenal reductase of Drosophila melanogaster (Fruit fly).